A 65-amino-acid chain; its full sequence is Large ribosomal subunit protein bL35 (65 aa).

This sequence belongs to the bacterial ribosomal protein bL35 family.

The chain is Large ribosomal subunit protein bL35 from Prochlorococcus marinus (strain MIT 9215).